The chain runs to 212 residues: Small ribosomal subunit protein uS2 (212 aa).

The interval 190–212 is disordered; it reads LSPDAPEDQPAPVSEFETKVKMV.

This sequence belongs to the universal ribosomal protein uS2 family.

The sequence is that of Small ribosomal subunit protein uS2 from Ignicoccus hospitalis (strain KIN4/I / DSM 18386 / JCM 14125).